Consider the following 790-residue polypeptide: Serine/threonine-protein kinase DCLK3 (790 aa).

Residues 1-37 are disordered; it reads MPAAPVLRPPPPPATPAPPAPSRPAPPIPGHRGPCDH. The span at 7-29 shows a compositional bias: pro residues; sequence LRPPPPPATPAPPAPSRPAPPIP. The Doublecortin domain occupies 97-183; it reads RVVTVVKLGG…KEPLTLKSIQ (87 aa). The span at 201 to 218 shows a compositional bias: low complexity; the sequence is HSRVPSPRLRSRLPSKLL. Disordered regions lie at residues 201-290 and 315-506; these read HSRV…SGEK and LQLG…KGII. Composition is skewed to basic and acidic residues over residues 332-345, 352-400, 425-434, and 457-496; these read DLGRAQKRDSEKLV, RPSE…ESQD, IDMRREDRHT, and TRGEEKQAEHEKKPGGLGERRAPEKESKRKLEEKRPERPS. Residues 514–771 enclose the Protein kinase domain; it reads YDIGGVIGDG…AEQVLQHPWI (258 aa). ATP contacts are provided by residues 520–528 and Lys-543; that span reads IGDGNFATV. The active-site Proton acceptor is Asp-635.

This sequence belongs to the protein kinase superfamily. CAMK Ser/Thr protein kinase family. CaMK subfamily. Highly expressed in brain and to a lower extent in liver and kidney.

It is found in the cytoplasm. It localises to the nucleus. The catalysed reaction is L-seryl-[protein] + ATP = O-phospho-L-seryl-[protein] + ADP + H(+). It carries out the reaction L-threonyl-[protein] + ATP = O-phospho-L-threonyl-[protein] + ADP + H(+). In Mus musculus (Mouse), this protein is Serine/threonine-protein kinase DCLK3 (Dclk3).